We begin with the raw amino-acid sequence, 299 residues long: ATP phosphoribosyltransferase (299 aa).

This sequence belongs to the ATP phosphoribosyltransferase family. Long subfamily. Requires Mg(2+) as cofactor.

The protein resides in the cytoplasm. It carries out the reaction 1-(5-phospho-beta-D-ribosyl)-ATP + diphosphate = 5-phospho-alpha-D-ribose 1-diphosphate + ATP. Its pathway is amino-acid biosynthesis; L-histidine biosynthesis; L-histidine from 5-phospho-alpha-D-ribose 1-diphosphate: step 1/9. With respect to regulation, feedback inhibited by histidine. Functionally, catalyzes the condensation of ATP and 5-phosphoribose 1-diphosphate to form N'-(5'-phosphoribosyl)-ATP (PR-ATP). Has a crucial role in the pathway because the rate of histidine biosynthesis seems to be controlled primarily by regulation of HisG enzymatic activity. This is ATP phosphoribosyltransferase from Shewanella denitrificans (strain OS217 / ATCC BAA-1090 / DSM 15013).